The sequence spans 286 residues: Plasma membrane ascorbate-dependent reductase CYBRD1 (286 aa).

At 1-7 (MAMEGYR) the chain is on the cytoplasmic side. Residues 8–32 (GFLGLLVSALLVGFLSVIFVLIWVL) form a helical membrane-spanning segment. The region spanning 15–220 (SALLVGFLSV…FGALIFWIVT (206 aa)) is the Cytochrome b561 domain. Residues 33-47 (HFREGLGWDGGALEF) lie on the Extracellular side of the membrane. Residues 48–69 (NWHPVLAVTGFVFIQGIAIIVY) form a helical membrane-spanning segment. H50, R70, and K79 together coordinate heme b. Residues 70-78 (RLPWTWKCS) are Cytoplasmic-facing. L-ascorbate is bound by residues K79 and K83. The chain crosses the membrane as a helical span at residues 79–105 (KFLMKSIHAGLNAVAAILAIISVVAVF). H86 contacts heme b. Residues 106-118 (DYHNVRKIPHMYS) lie on the Extracellular side of the membrane. Residue H108 coordinates Fe(3+). Heme b contacts are provided by residues 115–118 (HMYS) and H120. The helical transmembrane segment at 119 to 144 (LHSWVGLTVLILYIQQLVVGFFIFLL) threads the bilayer. Topologically, residues 145–151 (PWAPPSL) are cytoplasmic. R152 lines the L-ascorbate pocket. Residues 152 to 179 (RAIVMPIHVYSGLLLFGTVIATVLMGVT) traverse the membrane as a helical segment. Residues H159 and E180 each contribute to the heme b site. Residues 180 to 197 (EKLFFVLKNPSYHSFPPE) are Extracellular-facing. A helical membrane pass occupies residues 198-222 (GVFTNTLGLLILVFGALIFWIVTRP). Topologically, residues 223–286 (QWKRPREPGS…LVDTGQRSTM (64 aa)) are cytoplasmic. K225 contacts heme b. Position 232 is a phosphoserine (S232). T285 bears the Phosphothreonine mark.

Homodimer. Heme b is required as a cofactor. As to expression, highly expressed in all regions of the small intestine and colon studied in suckling animals. However, after weaning, when iron absorption declines significantly, strong expression is retained only in the duodenum. Also expressed in respiratory epithelium.

It is found in the cell membrane. Its subcellular location is the apical cell membrane. It carries out the reaction Fe(3+)(out) + L-ascorbate(in) = monodehydro-L-ascorbate radical(in) + Fe(2+)(out) + H(+). The enzyme catalyses Cu(2+)(out) + L-ascorbate(in) = Cu(+)(out) + monodehydro-L-ascorbate radical(in) + H(+). It catalyses the reaction monodehydro-L-ascorbate radical(out) + L-ascorbate(in) = monodehydro-L-ascorbate radical(in) + L-ascorbate(out). In terms of biological role, plasma membrane reductase that uses cytoplasmic ascorbate as an electron donor to reduce extracellular Fe(3+) into Fe(2+). Probably functions in dietary iron absorption at the brush border of duodenal enterocytes by producing Fe(2+), the divalent form of iron that can be transported into enterocytes. It is also able to reduce extracellular monodehydro-L-ascorbate and may be involved in extracellular ascorbate regeneration by erythrocytes in blood. May also act as a ferrireductase in airway epithelial cells. May also function as a cupric transmembrane reductase. This Rattus norvegicus (Rat) protein is Plasma membrane ascorbate-dependent reductase CYBRD1.